The chain runs to 188 residues: Adenine phosphoribosyltransferase (188 aa).

The protein belongs to the purine/pyrimidine phosphoribosyltransferase family. Homodimer.

Its subcellular location is the cytoplasm. It catalyses the reaction AMP + diphosphate = 5-phospho-alpha-D-ribose 1-diphosphate + adenine. It participates in purine metabolism; AMP biosynthesis via salvage pathway; AMP from adenine: step 1/1. Catalyzes a salvage reaction resulting in the formation of AMP, that is energically less costly than de novo synthesis. The sequence is that of Adenine phosphoribosyltransferase from Salinispora arenicola (strain CNS-205).